The chain runs to 358 residues: DnaJ homolog subfamily B member 11 (358 aa).

Positions 1-22 (MAPQNLGTLCLLLLYLLGAAIA) are cleaved as a signal peptide. A J domain is found at 25–90 (DFYKILGVPR…EKRKQYDTYG (66 aa)). Phosphothreonine is present on T188. Residue N261 is glycosylated (N-linked (GlcNAc...) asparagine).

Part of a large chaperone multiprotein complex comprising DNAJB11, HSP90B1, HSPA5, HYOU, PDIA2, PDIA4, PDIA6, PPIB, SDF2L1, UGGT1 and very small amounts of ERP29, but not, or at very low levels, CALR nor CANX. Binds to denatured substrates in an ATP-independent manner. Interacts via the J domain with HSPA5 in an ATP-dependent manner. Contains high-mannose Endo H-sensitive carbohydrates. In terms of processing, cys-169, Cys-171, Cys-193 and Cys-196 form intramolecular disulfide bonds. The preferential partner for each Cys is not known. Pancreas.

It is found in the endoplasmic reticulum lumen. Functionally, as a co-chaperone for HSPA5 it is required for proper folding, trafficking or degradation of proteins. Binds directly to both unfolded proteins that are substrates for ERAD and nascent unfolded peptide chains, but dissociates from the HSPA5-unfolded protein complex before folding is completed. May help recruiting HSPA5 and other chaperones to the substrate. Stimulates HSPA5 ATPase activity. It is necessary for maturation and correct trafficking of PKD1. The protein is DnaJ homolog subfamily B member 11 (DNAJB11) of Canis lupus familiaris (Dog).